The following is a 170-amino-acid chain: APRG1 tumor suppressor candidate (170 aa).

A helical transmembrane segment spans residues 150 to 170 (IALALAGPGAILILELSWFLG).

Expressed at high levels in the pancreas and placenta. As to expression, expressed at high levels in the kidney.

Its subcellular location is the membrane. The chain is APRG1 tumor suppressor candidate from Homo sapiens (Human).